The sequence spans 229 residues: Lipoprotein-releasing system ATP-binding protein LolD (229 aa).

One can recognise an ABC transporter domain in the interval 9 to 229; the sequence is LRLEQVARRY…TIREGQIVPA (221 aa). 45-52 contacts ATP; the sequence is APSGTGKS.

It belongs to the ABC transporter superfamily. Lipoprotein translocase (TC 3.A.1.125) family. In terms of assembly, the complex is composed of two ATP-binding proteins (LolD) and two transmembrane proteins (LolC and LolE).

Its subcellular location is the cell inner membrane. Part of the ABC transporter complex LolCDE involved in the translocation of mature outer membrane-directed lipoproteins, from the inner membrane to the periplasmic chaperone, LolA. Responsible for the formation of the LolA-lipoprotein complex in an ATP-dependent manner. The sequence is that of Lipoprotein-releasing system ATP-binding protein LolD from Granulibacter bethesdensis (strain ATCC BAA-1260 / CGDNIH1).